A 46-amino-acid polypeptide reads, in one-letter code: MLTTQKCESREGKNDEIFELGESNSDKILLKHGKCNLFSERKPVNH.

This is an uncharacterized protein from Saccharomyces cerevisiae (strain ATCC 204508 / S288c) (Baker's yeast).